The sequence spans 199 residues: FMN-dependent NADH:quinone oxidoreductase 2 (199 aa).

FMN contacts are provided by residues Ser-10, 16–18, and 96–99; these read SVS and MYNF.

Belongs to the azoreductase type 1 family. In terms of assembly, homodimer. It depends on FMN as a cofactor.

It catalyses the reaction 2 a quinone + NADH + H(+) = 2 a 1,4-benzosemiquinone + NAD(+). The catalysed reaction is N,N-dimethyl-1,4-phenylenediamine + anthranilate + 2 NAD(+) = 2-(4-dimethylaminophenyl)diazenylbenzoate + 2 NADH + 2 H(+). Its function is as follows. Quinone reductase that provides resistance to thiol-specific stress caused by electrophilic quinones. Also exhibits azoreductase activity. Catalyzes the reductive cleavage of the azo bond in aromatic azo compounds to the corresponding amines. The chain is FMN-dependent NADH:quinone oxidoreductase 2 from Pseudomonas fluorescens (strain Pf0-1).